Reading from the N-terminus, the 302-residue chain is Aspartate carbamoyltransferase catalytic subunit (302 aa).

Residues Arg51 and Thr52 each coordinate carbamoyl phosphate. Lys80 contacts L-aspartate. 3 residues coordinate carbamoyl phosphate: Arg101, His129, and Gln132. Arg162 and Arg224 together coordinate L-aspartate. 2 residues coordinate carbamoyl phosphate: Leu263 and Pro264.

The protein belongs to the aspartate/ornithine carbamoyltransferase superfamily. ATCase family. As to quaternary structure, heterododecamer (2C3:3R2) of six catalytic PyrB chains organized as two trimers (C3), and six regulatory PyrI chains organized as three dimers (R2).

It catalyses the reaction carbamoyl phosphate + L-aspartate = N-carbamoyl-L-aspartate + phosphate + H(+). It participates in pyrimidine metabolism; UMP biosynthesis via de novo pathway; (S)-dihydroorotate from bicarbonate: step 2/3. Functionally, catalyzes the condensation of carbamoyl phosphate and aspartate to form carbamoyl aspartate and inorganic phosphate, the committed step in the de novo pyrimidine nucleotide biosynthesis pathway. This is Aspartate carbamoyltransferase catalytic subunit from Azobacteroides pseudotrichonymphae genomovar. CFP2.